Here is a 453-residue protein sequence, read N- to C-terminus: Probable exopolygalacturonase B (453 aa).

A signal peptide spans 1–16 (MKFLALAALFASTVSS). N-linked (GlcNAc...) asparagine glycosylation is found at Asn185 and Asn225. Asp255 acts as the Proton donor in catalysis. Cys257 and Cys274 are oxidised to a cystine. Asn263 and Asn275 each carry an N-linked (GlcNAc...) asparagine glycan. His278 is a catalytic residue. PbH1 repeat units lie at residues 295–316 (IENV…RLKA) and 327–348 (INNV…VLDQ). N-linked (GlcNAc...) asparagine glycosylation is found at Asn302, Asn329, Asn354, and Asn366. One copy of the PbH1 3 repeat lies at 362–405 (PSRVNFTNIVFENIYGTSSGKHGKVVADLTCSPNAVCSGIRLKN). A disulfide bond links Cys392 and Cys398. Asn436 carries an N-linked (GlcNAc...) asparagine glycan.

Belongs to the glycosyl hydrolase 28 family.

Its subcellular location is the secreted. It catalyses the reaction [(1-&gt;4)-alpha-D-galacturonosyl](n) + H2O = alpha-D-galacturonate + [(1-&gt;4)-alpha-D-galacturonosyl](n-1). Its function is as follows. Specific in hydrolyzing the terminal glycosidic bond of polygalacturonic acid and oligogalacturonates. This chain is Probable exopolygalacturonase B (pgxB), found in Neosartorya fischeri (strain ATCC 1020 / DSM 3700 / CBS 544.65 / FGSC A1164 / JCM 1740 / NRRL 181 / WB 181) (Aspergillus fischerianus).